Here is a 254-residue protein sequence, read N- to C-terminus: RNA polymerase sigma factor SigI8 (254 aa).

The short motif at 61–74 is the Polymerase core binding element; sequence DEYSIALIAFNEAI. Positions 209-228 form a DNA-binding region, H-T-H motif; sequence YKELTERFNLCRRTLEKNRK.

Belongs to the sigma-70 factor family. SigI subfamily. Interacts with RsgI8.

The protein resides in the cytoplasm. Its activity is regulated as follows. Negatively regulated by the anti-sigma-I factor RsgI8. Its function is as follows. Sigma factors are initiation factors that promote the attachment of RNA polymerase to specific initiation sites and are then released. This is RNA polymerase sigma factor SigI8 from Acetivibrio thermocellus (strain ATCC 27405 / DSM 1237 / JCM 9322 / NBRC 103400 / NCIMB 10682 / NRRL B-4536 / VPI 7372) (Clostridium thermocellum).